Reading from the N-terminus, the 490-residue chain is Limb region 1 protein homolog (490 aa).

Over 1–19 the chain is Extracellular; the sequence is MEGQDEVSAREQHFHSQVR. The chain crosses the membrane as a helical span at residues 20-40; it reads ESTICFLLFAILYVVSYFIIT. Over 41–62 the chain is Cytoplasmic; sequence RYKRKSDEQEDEDAIVNRISLF. Residues 63 to 83 form a helical membrane-spanning segment; that stretch reads LSTFTLAVSAGAVLLLPFSII. At 84–110 the chain is on the extracellular side; it reads SNEILLSFPQNYYIQWLNGSLIHGLWN. Residues 111 to 131 form a helical membrane-spanning segment; the sequence is LASLFSNLCLFVLMPFAFFFL. Residues 132-151 are Cytoplasmic-facing; it reads ESEGFAGLKKGIRARILETL. A helical membrane pass occupies residues 152-172; that stretch reads VMLLLLALLILGIVWVASALI. The Extracellular segment spans residues 173-187; the sequence is DNDAASMESLYDLWE. Residues 188-208 form a helical membrane-spanning segment; that stretch reads FYLPYLYSCISLMGCLLLLLC. Topologically, residues 209–291 are cytoplasmic; the sequence is TPVGLSRMFT…RKKASAWERN (83 aa). Residues 250-287 are a coiled coil; that stretch reads RLNGLSSSVEYNIMELEQELENVKTLKTKLERRKKASA. A helical transmembrane segment spans residues 292-312; sequence LVYPAVMVLLLIETSISVLLV. Residues 313–339 lie on the Extracellular side of the membrane; the sequence is ACNILCLLVDETAMPKGTRGPGIGNAS. The chain crosses the membrane as a helical span at residues 340–360; that stretch reads LSTFGFVGAALEIILIFYLMV. Over 361-383 the chain is Cytoplasmic; sequence SSVVGFYSLRFFGNFTPKKDDTT. A helical membrane pass occupies residues 384–404; the sequence is MTKIIGNCVSILVLSSALPVM. Over 405–426 the chain is Extracellular; the sequence is SRTLGITRFDLLGDFGRFNWLG. A helical membrane pass occupies residues 427 to 447; that stretch reads NFYIVLSYNLLFAIVTTLCLV. Residues 448 to 490 lie on the Cytoplasmic side of the membrane; the sequence is RKFTSAVREELFKALGLHKLHLPNTSRDSETAKPSVNGHQKAL.

This sequence belongs to the LIMR family. As to expression, widely expressed with strongest expression in heart and pancreas.

It is found in the membrane. In terms of biological role, putative membrane receptor. The sequence is that of Limb region 1 protein homolog (LMBR1) from Homo sapiens (Human).